The following is a 470-amino-acid chain: Argininosuccinate lyase (470 aa).

The protein belongs to the lyase 1 family. Argininosuccinate lyase subfamily.

The protein localises to the cytoplasm. The enzyme catalyses 2-(N(omega)-L-arginino)succinate = fumarate + L-arginine. Its pathway is amino-acid biosynthesis; L-arginine biosynthesis; L-arginine from L-ornithine and carbamoyl phosphate: step 3/3. The sequence is that of Argininosuccinate lyase from Mycolicibacterium vanbaalenii (strain DSM 7251 / JCM 13017 / BCRC 16820 / KCTC 9966 / NRRL B-24157 / PYR-1) (Mycobacterium vanbaalenii).